The chain runs to 401 residues: S-adenosylmethionine synthase (401 aa).

135–140 (GHGSGD) lines the ATP pocket.

This sequence belongs to the AdoMet synthase 2 family. Requires Mg(2+) as cofactor.

The catalysed reaction is L-methionine + ATP + H2O = S-adenosyl-L-methionine + phosphate + diphosphate. Its pathway is amino-acid biosynthesis; S-adenosyl-L-methionine biosynthesis; S-adenosyl-L-methionine from L-methionine: step 1/1. Catalyzes the formation of S-adenosylmethionine from methionine and ATP. The chain is S-adenosylmethionine synthase (mat) from Methanothermobacter thermautotrophicus (strain ATCC 29096 / DSM 1053 / JCM 10044 / NBRC 100330 / Delta H) (Methanobacterium thermoautotrophicum).